The chain runs to 622 residues: Low affinity potassium transport system protein Kup (622 aa).

Helical transmembrane passes span 9–29, 49–69, 101–121, 137–157, 165–185, 212–232, 247–267, 276–296, 337–357, 363–383, 397–417, and 419–439; these read LPAVTLAAIGVVYGDIGTSPL, VFGFLSLIFWLLVLVVSLKYL, VLVIMGLIGGSFFYGEVVITP, PAMDSYIVPLSIVVLTLLFII, VGKLFAPVMLIWFLTLGVLGV, AVSFFALGAVVLAITGVEALY, WFTVVLPSLVLNYFGQGALLL, PFFLLAPDWALIPLMVLATLA, IYIPAINWMLYIAVVIVIVSF, LAAAYGIAVTGTMVITSILFC, AWVLLVGLLIIDVPMFLANVV, and ILSGGWLPLALGMVMFIIMTT.

This sequence belongs to the HAK/KUP transporter (TC 2.A.72) family.

The protein localises to the cell inner membrane. It carries out the reaction K(+)(in) + H(+)(in) = K(+)(out) + H(+)(out). Functionally, responsible for the low-affinity transport of potassium into the cell. Likely operates as a K(+):H(+) symporter. This is Low affinity potassium transport system protein Kup from Pectobacterium atrosepticum (strain SCRI 1043 / ATCC BAA-672) (Erwinia carotovora subsp. atroseptica).